The primary structure comprises 574 residues: Proline--tRNA ligase (574 aa).

This sequence belongs to the class-II aminoacyl-tRNA synthetase family. ProS type 1 subfamily. As to quaternary structure, homodimer.

Its subcellular location is the cytoplasm. It catalyses the reaction tRNA(Pro) + L-proline + ATP = L-prolyl-tRNA(Pro) + AMP + diphosphate. Catalyzes the attachment of proline to tRNA(Pro) in a two-step reaction: proline is first activated by ATP to form Pro-AMP and then transferred to the acceptor end of tRNA(Pro). As ProRS can inadvertently accommodate and process non-cognate amino acids such as alanine and cysteine, to avoid such errors it has two additional distinct editing activities against alanine. One activity is designated as 'pretransfer' editing and involves the tRNA(Pro)-independent hydrolysis of activated Ala-AMP. The other activity is designated 'posttransfer' editing and involves deacylation of mischarged Ala-tRNA(Pro). The misacylated Cys-tRNA(Pro) is not edited by ProRS. This is Proline--tRNA ligase from Fervidobacterium nodosum (strain ATCC 35602 / DSM 5306 / Rt17-B1).